Here is a 163-residue protein sequence, read N- to C-terminus: Bursicon (163 aa).

An N-terminal signal peptide occupies residues 1–23 (MKSTFLVVLELAFFLLPGRVLYA). Cystine bridges form between C39–C88, C53–C102, C63–C123, C67–C125, and C85–C128. In terms of domain architecture, CTCK spans 39 to 129 (CQVTPVIHVL…PLECMCRPCT (91 aa)).

In terms of assembly, heterodimer of burs and pburs.

The protein localises to the secreted. In terms of biological role, final heterodimeric neurohormone released at the end of the molting cycle, involved in the sclerotization (tanning) of the insect cuticle, melanization and wing spreading. This Anopheles gambiae (African malaria mosquito) protein is Bursicon (burs124).